The following is a 454-amino-acid chain: Glutamyl-tRNA(Gln) amidotransferase subunit A (454 aa).

Catalysis depends on charge relay system residues Lys-56 and Ser-131. Ser-155 functions as the Acyl-ester intermediate in the catalytic mechanism.

It belongs to the amidase family. GatA subfamily. In terms of assembly, heterotrimer of A, B and C subunits.

It carries out the reaction L-glutamyl-tRNA(Gln) + L-glutamine + ATP + H2O = L-glutaminyl-tRNA(Gln) + L-glutamate + ADP + phosphate + H(+). Allows the formation of correctly charged Gln-tRNA(Gln) through the transamidation of misacylated Glu-tRNA(Gln) in organisms which lack glutaminyl-tRNA synthetase. The reaction takes place in the presence of glutamine and ATP through an activated gamma-phospho-Glu-tRNA(Gln). The chain is Glutamyl-tRNA(Gln) amidotransferase subunit A from Campylobacter lari (strain RM2100 / D67 / ATCC BAA-1060).